The primary structure comprises 227 residues: Small ribosomal subunit protein uS3 (227 aa).

One can recognise a KH type-2 domain in the interval Ile-39 to Lys-108.

This sequence belongs to the universal ribosomal protein uS3 family. As to quaternary structure, part of the 30S ribosomal subunit. Forms a tight complex with proteins S10 and S14.

Its function is as follows. Binds the lower part of the 30S subunit head. Binds mRNA in the 70S ribosome, positioning it for translation. This chain is Small ribosomal subunit protein uS3, found in Persephonella marina (strain DSM 14350 / EX-H1).